A 969-amino-acid polypeptide reads, in one-letter code: Rab3 GTPase-activating protein catalytic subunit (969 aa).

Over residues 532 to 549 (DDGKKSSSSDGARDRSRG) the composition is skewed to basic and acidic residues. The tract at residues 532-613 (DDGKKSSSSD…PEGRLQPHGT (82 aa)) is disordered. Positions 550–572 (APEGAGPEGAGPAEAAGKSWDSW) are enriched in low complexity. A compositionally biased stretch (acidic residues) spans 573–589 (SDSEDEFFECVSDTEEM). Positions 590–608 (KEDKEEAENRSRSKPEGRL) are enriched in basic and acidic residues.

It belongs to the Rab3-GAP catalytic subunit family. As to quaternary structure, the Rab3 GTPase-activating complex is a heterodimer composed of rab3gap1 and rab3gap2. The Rab3 GTPase-activating complex interacts with DMXL2. Interacts with LMAN1.

Its subcellular location is the cytoplasm. The protein localises to the endoplasmic reticulum. It localises to the golgi apparatus. It is found in the cis-Golgi network. Catalytic subunit of the Rab3 GTPase-activating (Rab3GAP) complex composed of rab3gap1 and rab3gap2, which has GTPase-activating protein (GAP) activity towards various Rab3 subfamily members (RAB3A, RAB3B, RAB3C and RAB3D), RAB5A and RAB43, and guanine nucleotide exchange factor (GEF) activity towards RAB18. As part of the Rab3GAP complex, acts as a GAP for Rab3 proteins by converting active RAB3-GTP to the inactive form RAB3-GDP. Rab3 proteins are involved in regulated exocytosis of neurotransmitters and hormones. The Rab3GAP complex, acts as a GEF for RAB18 by promoting the conversion of inactive RAB18-GDP to the active form RAB18-GTP. Recruits and stabilizes RAB18 at the cis-Golgi membrane where RAB18 is most likely activated. Also involved in RAB18 recruitment at the endoplasmic reticulum (ER) membrane where it maintains proper ER structure. Required for normal eye and brain development. May participate in neurodevelopmental processes such as proliferation, migration and differentiation before synapse formation, and non-synaptic vesicular release of neurotransmitters. In Danio rerio (Zebrafish), this protein is Rab3 GTPase-activating protein catalytic subunit (rab3gap1).